The following is an 868-amino-acid chain: Facilitated trehalose transporter Tret1 (868 aa).

2 disordered regions span residues 1-213 (MSGR…QKAT) and 257-314 (KESS…LIHR). Residues 1-403 (MSGRDNRGAG…VYRPTTNPIY (403 aa)) are Cytoplasmic-facing. Basic and acidic residues predominate over residues 25-43 (KLKEKLTRAGDDQGYHRVE). 3 stretches are compositionally biased toward low complexity: residues 44-57 (SNLSTSNTATSLDT), 79-91 (PQQQQQQQRQQLR), and 117-126 (PFQQQQQRTP). Basic and acidic residues-rich tracts occupy residues 146–155 (EIREHRDRQQ) and 257–290 (KESSSEEEFHKTRREFQGRKHQSLDPRVTFKLDK). Ser-259, Ser-260, Ser-261, Ser-331, and Ser-333 each carry phosphoserine. Positions 335–367 (EDFHTSRQHFQQQRSISTDSRKSRRPYEMDEMG) are disordered. Over residues 342-352 (QHFQQQRSIST) the composition is skewed to polar residues. Over residues 353–367 (DSRKSRRPYEMDEMG) the composition is skewed to basic and acidic residues. Residues 404–424 (IWTQVLAALSVSLGSLVVGFV) traverse the membrane as a helical segment. Residues 425 to 451 (SAYTSPALVSMTNRNMTSFEVTPQAAS) are Extracellular-facing. An N-linked (GlcNAc...) asparagine glycan is attached at Asn-439. A helical transmembrane segment spans residues 452-472 (WVGGIMPLAGLAGGIAGGPFI). Over 473-484 (EYLGRRNTILAT) the chain is Cytoplasmic. A helical transmembrane segment spans residues 485–505 (AIPFIVSSLLIACAVNVAMVL). At 506–508 (AGR) the chain is on the extracellular side. A helical membrane pass occupies residues 509–529 (FLAGFCVGIASLSLPVYLGET). The Cytoplasmic segment spans residues 530-535 (VQPEVR). The chain crosses the membrane as a helical span at residues 536–556 (GTLGLLPTAFGNIGILLCFVA). Over 557–563 (GTYMDWS) the chain is Extracellular. Residues 564-584 (MLAFLGAALPVPFLILMFLIP) form a helical membrane-spanning segment. Residues 585–653 (ETPRWFVSRG…NLKPLSISLG (69 aa)) lie on the Cytoplasmic side of the membrane. Residues 654–674 (LMFFQQLSGINAVIFYTVSIF) traverse the membrane as a helical segment. The Extracellular segment spans residues 675–684 (KDAGSTIDGN). The helical transmembrane segment at 685-705 (LCTIIVGIVNFMATFIATLLI) threads the bilayer. The Cytoplasmic portion of the chain corresponds to 706-711 (DRAGRK). The helical transmembrane segment at 712–732 (ILLYVSNIAMIITLFVLGGFF) threads the bilayer. The Extracellular portion of the chain corresponds to 733 to 751 (YCKSHGQDVSQLGWLPLSC). The chain crosses the membrane as a helical span at residues 752-772 (FVIYILGFSLGFGPIPWLMMG). Residues 773 to 778 (EILPSK) lie on the Cytoplasmic side of the membrane. A helical membrane pass occupies residues 779–799 (IRGSAASVATAFNWSCTFVVT). The Extracellular portion of the chain corresponds to 800 to 812 (KTFQDMIDFMGAH). A helical transmembrane segment spans residues 813-833 (GAFWLFGSICFIGLFFVILYV). Residues 834–868 (PETQGKTLEDIERKMMGRVRRMSSVANMKPLAFNM) are Cytoplasmic-facing. Phosphoserine occurs at positions 856 and 857.

It belongs to the major facilitator superfamily. Sugar transporter (TC 2.A.1.1) family. Trehalose transporter subfamily.

It localises to the cell membrane. Low-capacity facilitative transporter for trehalose. Does not transport maltose, sucrose or lactose. Mediates the bidirectional transfer of trehalose. Responsible for the transport of trehalose synthesized in the fat body and the incorporation of trehalose into other tissues that require a carbon source, thereby regulating trehalose levels in the hemolymph. This chain is Facilitated trehalose transporter Tret1, found in Drosophila pseudoobscura pseudoobscura (Fruit fly).